The chain runs to 215 residues: Small ribosomal subunit protein uS7 (215 aa).

It belongs to the universal ribosomal protein uS7 family. In terms of assembly, part of the 30S ribosomal subunit.

In terms of biological role, one of the primary rRNA binding proteins, it binds directly to 16S rRNA where it nucleates assembly of the head domain of the 30S subunit. Is located at the subunit interface close to the decoding center. This is Small ribosomal subunit protein uS7 from Pyrococcus furiosus (strain ATCC 43587 / DSM 3638 / JCM 8422 / Vc1).